A 144-amino-acid polypeptide reads, in one-letter code: MRLNTLSPAEGAKHAPKRVGRGIGSGLGKTAGRGHKGQNSRSGGGVRRGFEGGQMPLYRRLPKFGFTSRKAMITAEVRLSELALVEGDVIDLNTLKAANVVGVQIEFAKVMLSGEIARPVTLRGLRVTKGARAAIEAAGGKIEE.

The tract at residues 1 to 53 is disordered; the sequence is MRLNTLSPAEGAKHAPKRVGRGIGSGLGKTAGRGHKGQNSRSGGGVRRGFEGG. Residues 21-31 show a composition bias toward gly residues; that stretch reads RGIGSGLGKTA.

It belongs to the universal ribosomal protein uL15 family. Part of the 50S ribosomal subunit.

Its function is as follows. Binds to the 23S rRNA. The protein is Large ribosomal subunit protein uL15 of Serratia proteamaculans (strain 568).